Reading from the N-terminus, the 256-residue chain is MTDVSRVLKEARDQGRLTTLDYANLIFDDFMELHGDRHFSDDGAIVGGLAYLAGQPVTVIGIQKGKNLQDNLARNFGQPNPEGYRKALRLMKQAEKFGRPVVTFINTAGAYPGVGAEERGQGEAIAKNLMEMSDLKVPIIAIIIGEGGSGGALALAVADQVWMLENTMYAVLSPEGFASILWKDGSRATEAAELMKITAGELYKMGIVDRIIPEHGYFSSEIVDIIKANLIEQITSLQAKPLDQLLDERYQRFRKY.

One can recognise a CoA carboxyltransferase C-terminal domain in the interval Met1 to Ser236.

It belongs to the AccA family. In terms of assembly, acetyl-CoA carboxylase is a heterohexamer composed of biotin carboxyl carrier protein (AccB), biotin carboxylase (AccC) and two subunits each of ACCase subunit alpha (AccA) and ACCase subunit beta (AccD).

It localises to the cytoplasm. It catalyses the reaction N(6)-carboxybiotinyl-L-lysyl-[protein] + acetyl-CoA = N(6)-biotinyl-L-lysyl-[protein] + malonyl-CoA. It participates in lipid metabolism; malonyl-CoA biosynthesis; malonyl-CoA from acetyl-CoA: step 1/1. Component of the acetyl coenzyme A carboxylase (ACC) complex. First, biotin carboxylase catalyzes the carboxylation of biotin on its carrier protein (BCCP) and then the CO(2) group is transferred by the carboxyltransferase to acetyl-CoA to form malonyl-CoA. The sequence is that of Acetyl-coenzyme A carboxylase carboxyl transferase subunit alpha from Streptococcus pyogenes serotype M12 (strain MGAS2096).